The primary structure comprises 248 residues: ATP synthase subunit a, chloroplastic (248 aa).

Transmembrane regions (helical) follow at residues 37–57, 96–116, 135–155, 200–220, and 221–241; these read AQVLITSWVVIAILLGLSIVA, VPFIGTMFLFIFVSNWSGALF, INTTVALALLTSVAYFYAGLH, LVVAVLISLVPLVVPIPMMFL, and GLFTSAIQALIFATLAAAYIG.

Belongs to the ATPase A chain family. As to quaternary structure, F-type ATPases have 2 components, CF(1) - the catalytic core - and CF(0) - the membrane proton channel. CF(1) has five subunits: alpha(3), beta(3), gamma(1), delta(1), epsilon(1). CF(0) has four main subunits: a, b, b' and c.

It is found in the plastid. Its subcellular location is the chloroplast thylakoid membrane. Its function is as follows. Key component of the proton channel; it plays a direct role in the translocation of protons across the membrane. The sequence is that of ATP synthase subunit a, chloroplastic from Angiopteris evecta (Mule's foot fern).